The following is a 218-amino-acid chain: Glutathione S-transferase Mu 2 (218 aa).

Residues 2–88 (PMTLGYWDIR…YLGRKHNLCG (87 aa)) enclose the GST N-terminal domain. 7–8 (YW) provides a ligand contact to glutathione. Serine 27 and serine 44 each carry phosphoserine. Residues 43-46 (RSQW), lysine 50, 59-60 (NL), and 72-73 (QS) each bind glutathione. One can recognise a GST C-terminal domain in the interval 90–214 (TEEERIRVDV…SKPIFAKMAF (125 aa)). Residue tyrosine 116 coordinates substrate. Residue serine 117 is modified to Phosphoserine.

The protein belongs to the GST superfamily. Mu family. As to quaternary structure, homodimer or heterodimer.

It localises to the cytoplasm. It carries out the reaction RX + glutathione = an S-substituted glutathione + a halide anion + H(+). The enzyme catalyses 11(S)-hydroxy-14(S),15(S)-epoxy-(5Z,8Z,12E)-eicosatrienoate + glutathione = (11S,15S)-dihydroxy-14(R)-S-glutathionyl-(5Z,8Z,12E)-eicosatrienoate. Its function is as follows. Conjugation of reduced glutathione to a wide number of exogenous and endogenous hydrophobic electrophiles. Participates in the formation of novel hepoxilin regioisomers. The chain is Glutathione S-transferase Mu 2 from Rattus norvegicus (Rat).